The primary structure comprises 144 residues: Large ribosomal subunit protein uL15 (144 aa).

A disordered region spans residues 1–48; that stretch reads MQLNNLKPADGSKHAKRRVGRGIGSGLGKTAGRGHKGQKSRSGGFHKV. Over residues 21–31 the composition is skewed to gly residues; it reads RGIGSGLGKTA.

It belongs to the universal ribosomal protein uL15 family. As to quaternary structure, part of the 50S ribosomal subunit.

Binds to the 23S rRNA. In Cupriavidus metallidurans (strain ATCC 43123 / DSM 2839 / NBRC 102507 / CH34) (Ralstonia metallidurans), this protein is Large ribosomal subunit protein uL15.